The chain runs to 187 residues: ATP synthase subunit b, chloroplastic (187 aa).

A helical membrane pass occupies residues 34–56 (IINLSVVLGLVFTLGRNFLISLL).

It belongs to the ATPase B chain family. In terms of assembly, F-type ATPases have 2 components, F(1) - the catalytic core - and F(0) - the membrane proton channel. F(1) has five subunits: alpha(3), beta(3), gamma(1), delta(1), epsilon(1). F(0) has four main subunits: a(1), b(1), b'(1) and c(10-14). The alpha and beta chains form an alternating ring which encloses part of the gamma chain. F(1) is attached to F(0) by a central stalk formed by the gamma and epsilon chains, while a peripheral stalk is formed by the delta, b and b' chains.

It localises to the plastid. The protein resides in the chloroplast thylakoid membrane. F(1)F(0) ATP synthase produces ATP from ADP in the presence of a proton or sodium gradient. F-type ATPases consist of two structural domains, F(1) containing the extramembraneous catalytic core and F(0) containing the membrane proton channel, linked together by a central stalk and a peripheral stalk. During catalysis, ATP synthesis in the catalytic domain of F(1) is coupled via a rotary mechanism of the central stalk subunits to proton translocation. In terms of biological role, component of the F(0) channel, it forms part of the peripheral stalk, linking F(1) to F(0). The chain is ATP synthase subunit b, chloroplastic from Pleurastrum terricola (Filamentous green alga).